The following is a 297-amino-acid chain: Pyridoxal 5'-phosphate synthase subunit PdxS (297 aa).

D-ribose 5-phosphate is bound at residue Asp27. Catalysis depends on Lys84, which acts as the Schiff-base intermediate with D-ribose 5-phosphate. Position 156 (Gly156) interacts with D-ribose 5-phosphate. Arg168 lines the D-glyceraldehyde 3-phosphate pocket. D-ribose 5-phosphate-binding positions include Gly217 and 238-239 (GS).

The protein belongs to the PdxS/SNZ family. In the presence of PdxT, forms a dodecamer of heterodimers.

It catalyses the reaction aldehydo-D-ribose 5-phosphate + D-glyceraldehyde 3-phosphate + L-glutamine = pyridoxal 5'-phosphate + L-glutamate + phosphate + 3 H2O + H(+). The protein operates within cofactor biosynthesis; pyridoxal 5'-phosphate biosynthesis. In terms of biological role, catalyzes the formation of pyridoxal 5'-phosphate from ribose 5-phosphate (RBP), glyceraldehyde 3-phosphate (G3P) and ammonia. The ammonia is provided by the PdxT subunit. Can also use ribulose 5-phosphate and dihydroxyacetone phosphate as substrates, resulting from enzyme-catalyzed isomerization of RBP and G3P, respectively. The sequence is that of Pyridoxal 5'-phosphate synthase subunit PdxS from Corynebacterium diphtheriae (strain ATCC 700971 / NCTC 13129 / Biotype gravis).